We begin with the raw amino-acid sequence, 339 residues long: Deubiquitinase and deneddylase Dub2 (339 aa).

Residues 36 to 56 traverse the membrane as a helical segment; the sequence is IIIALFLIVISCGLILCAYTF. Active-site residues include His203, Asp220, and Cys282.

Belongs to the peptidase C48 family.

It localises to the secreted. The protein localises to the host cell. It is found in the membrane. Functionally, effector proteins function to alter host cell physiology and promote bacterial survival in host tissues. This protease possesses deubiquitinating and deneddylating activities. The polypeptide is Deubiquitinase and deneddylase Dub2 (cdu2) (Chlamydia trachomatis serovar B (strain Jali20/OT)).